The sequence spans 89 residues: Small ribosomal subunit protein uS14A (89 aa).

Belongs to the universal ribosomal protein uS14 family. As to quaternary structure, part of the 30S ribosomal subunit. Contacts proteins S3 and S10.

Binds 16S rRNA, required for the assembly of 30S particles and may also be responsible for determining the conformation of the 16S rRNA at the A site. The chain is Small ribosomal subunit protein uS14A from Staphylococcus haemolyticus (strain JCSC1435).